The primary structure comprises 331 residues: Fructose-1,6-bisphosphatase class 1 2 (331 aa).

Residues Glu80, Asp98, Leu100, and Asp101 each contribute to the Mg(2+) site. Residues 101–104 (DGSS) and Asn189 each bind substrate. Glu261 serves as a coordination point for Mg(2+).

Belongs to the FBPase class 1 family. Homotetramer. Requires Mg(2+) as cofactor.

It is found in the cytoplasm. The catalysed reaction is beta-D-fructose 1,6-bisphosphate + H2O = beta-D-fructose 6-phosphate + phosphate. Its pathway is carbohydrate biosynthesis; Calvin cycle. This Cereibacter sphaeroides (strain ATCC 17029 / ATH 2.4.9) (Rhodobacter sphaeroides) protein is Fructose-1,6-bisphosphatase class 1 2.